The primary structure comprises 102 residues: Small ribosomal subunit protein uS10 (102 aa).

Belongs to the universal ribosomal protein uS10 family. As to quaternary structure, part of the 30S ribosomal subunit.

Functionally, involved in the binding of tRNA to the ribosomes. In Sulfurihydrogenibium sp. (strain YO3AOP1), this protein is Small ribosomal subunit protein uS10.